The primary structure comprises 163 residues: UPF0262 protein RPD_4278 (163 aa).

It belongs to the UPF0262 family.

The protein is UPF0262 protein RPD_4278 of Rhodopseudomonas palustris (strain BisB5).